A 137-amino-acid chain; its full sequence is SPbeta prophage-derived disulfide bond formation protein A (137 aa).

The N-terminal stretch at 1–25 (MKKWIVLFLVLIAAAISIFVYVSTG) is a signal peptide. Residues 26–136 (SEKPFYNDIN…IEKFFDKNGD (111 aa)) form the Thioredoxin domain. Cys-58 and Cys-61 are joined by a disulfide.

This sequence belongs to the thioredoxin family.

The protein localises to the secreted. In terms of biological role, unknown; dispensable for production of the lantibiotic sublancin 168 and for competence for DNA uptake. This Bacillus subtilis (strain 168) protein is SPbeta prophage-derived disulfide bond formation protein A (bdbA).